Consider the following 432-residue polypeptide: GTPase HflX (432 aa).

A Hflx-type G domain is found at 202-367 (FTVALVGYTN…ELRRAVGRAM (166 aa)). GTP contacts are provided by residues 208–215 (GYTNAGKS), 233–237 (FATLD), 255–258 (DTVG), 321–324 (NKID), and 345–347 (SAQ). Positions 215 and 235 each coordinate Mg(2+).

This sequence belongs to the TRAFAC class OBG-HflX-like GTPase superfamily. HflX GTPase family. As to quaternary structure, monomer. Associates with the 50S ribosomal subunit. The cofactor is Mg(2+).

The protein resides in the cytoplasm. Functionally, GTPase that associates with the 50S ribosomal subunit and may have a role during protein synthesis or ribosome biogenesis. In Magnetococcus marinus (strain ATCC BAA-1437 / JCM 17883 / MC-1), this protein is GTPase HflX.